A 133-amino-acid chain; its full sequence is MTFNLCVLTPNRIIWDSEVKEIILSTNSGQIGVLPNHAPIATAVDIGILRIRFNDQWLTVALMGGFARIGNNEITVLVNDAERGSDIDPQEAQQTLEIAEANLRKAEGKRQRIEANLALRRARTRLEAVNVIS.

This sequence belongs to the ATPase epsilon chain family. In terms of assembly, F-type ATPases have 2 components, CF(1) - the catalytic core - and CF(0) - the membrane proton channel. CF(1) has five subunits: alpha(3), beta(3), gamma(1), delta(1), epsilon(1). CF(0) has three main subunits: a, b and c.

The protein localises to the plastid. It is found in the chloroplast thylakoid membrane. Functionally, produces ATP from ADP in the presence of a proton gradient across the membrane. This is ATP synthase epsilon chain, chloroplastic from Jasminum nudiflorum (Winter jasmine).